A 214-amino-acid polypeptide reads, in one-letter code: Ribonuclease HII (214 aa).

The RNase H type-2 domain maps to 26–214; that stretch reads EIVCGVDEAG…PVRAALDLIR (189 aa). Residues aspartate 32, glutamate 33, and aspartate 124 each contribute to the a divalent metal cation site.

Belongs to the RNase HII family. Mn(2+) is required as a cofactor. It depends on Mg(2+) as a cofactor.

Its subcellular location is the cytoplasm. It catalyses the reaction Endonucleolytic cleavage to 5'-phosphomonoester.. Functionally, endonuclease that specifically degrades the RNA of RNA-DNA hybrids. The protein is Ribonuclease HII of Burkholderia cenocepacia (strain HI2424).